Consider the following 140-residue polypeptide: uncharacterized protein (140 aa).

This is an uncharacterized protein from Fowlpox virus (strain NVSL) (FPV).